Consider the following 342-residue polypeptide: Dihydroorotase (342 aa).

The Zn(2+) site is built by histidine 13 and histidine 15. Residues 15-17 (HLR) and asparagine 41 each bind substrate. Zn(2+) is bound by residues lysine 98, histidine 135, and histidine 173. Position 98 is an N6-carboxylysine (lysine 98). Histidine 135 serves as a coordination point for substrate. Leucine 218 provides a ligand contact to substrate. Residue aspartate 246 coordinates Zn(2+). The active site involves aspartate 246. Residues histidine 250 and alanine 262 each contribute to the substrate site.

It belongs to the metallo-dependent hydrolases superfamily. DHOase family. Class II DHOase subfamily. Homodimer. Requires Zn(2+) as cofactor.

It catalyses the reaction (S)-dihydroorotate + H2O = N-carbamoyl-L-aspartate + H(+). It functions in the pathway pyrimidine metabolism; UMP biosynthesis via de novo pathway; (S)-dihydroorotate from bicarbonate: step 3/3. Functionally, catalyzes the reversible cyclization of carbamoyl aspartate to dihydroorotate. The polypeptide is Dihydroorotase (Vibrio campbellii (strain ATCC BAA-1116)).